The sequence spans 360 residues: Phosphoserine aminotransferase (360 aa).

Position 41 (arginine 41) interacts with L-glutamate. Pyridoxal 5'-phosphate-binding residues include tryptophan 101, threonine 152, aspartate 172, and glutamine 195. Lysine 196 carries the post-translational modification N6-(pyridoxal phosphate)lysine. Residue 237–238 participates in pyridoxal 5'-phosphate binding; that stretch reads NT.

It belongs to the class-V pyridoxal-phosphate-dependent aminotransferase family. SerC subfamily. As to quaternary structure, homodimer. The cofactor is pyridoxal 5'-phosphate.

The protein localises to the cytoplasm. The enzyme catalyses O-phospho-L-serine + 2-oxoglutarate = 3-phosphooxypyruvate + L-glutamate. The catalysed reaction is 4-(phosphooxy)-L-threonine + 2-oxoglutarate = (R)-3-hydroxy-2-oxo-4-phosphooxybutanoate + L-glutamate. Its pathway is amino-acid biosynthesis; L-serine biosynthesis; L-serine from 3-phospho-D-glycerate: step 2/3. It functions in the pathway cofactor biosynthesis; pyridoxine 5'-phosphate biosynthesis; pyridoxine 5'-phosphate from D-erythrose 4-phosphate: step 3/5. Catalyzes the reversible conversion of 3-phosphohydroxypyruvate to phosphoserine and of 3-hydroxy-2-oxo-4-phosphonooxybutanoate to phosphohydroxythreonine. The chain is Phosphoserine aminotransferase from Burkholderia lata (strain ATCC 17760 / DSM 23089 / LMG 22485 / NCIMB 9086 / R18194 / 383).